The sequence spans 115 residues: NADH-ubiquinone oxidoreductase chain 3 (115 aa).

The next 3 helical transmembrane spans lie at 3–23, 55–75, and 84–104; these read VMLA…IAFW, FFLV…LLPL, and LPTM…SLAY.

This sequence belongs to the complex I subunit 3 family. Core subunit of respiratory chain NADH dehydrogenase (Complex I) which is composed of 45 different subunits. Interacts with TMEM186. Interacts with TMEM242.

The protein resides in the mitochondrion inner membrane. It carries out the reaction a ubiquinone + NADH + 5 H(+)(in) = a ubiquinol + NAD(+) + 4 H(+)(out). Its function is as follows. Core subunit of the mitochondrial membrane respiratory chain NADH dehydrogenase (Complex I) which catalyzes electron transfer from NADH through the respiratory chain, using ubiquinone as an electron acceptor. Essential for the catalytic activity of complex I. This chain is NADH-ubiquinone oxidoreductase chain 3, found in Felis catus (Cat).